Reading from the N-terminus, the 398-residue chain is Na(+)/H(+) antiporter NhaA (398 aa).

11 consecutive transmembrane segments (helical) span residues 19 to 39 (IGGILLMLATALALIMANSPG), 64 to 84 (LLLWINDGLMAGFFFLVGLEL), 99 to 119 (IILPAIGALGGMVVPSCIYLA), 130 to 150 (GWAIPAATDIAFALGILSLLG), 159 to 179 (ILLTTLAIFDDIGAILIIACF), 182 to 202 (NDIYLPGLLIALLCMLILFIV), 222 to 242 (IAMLKSGVHATLAGVILAMFI), 266 to 286 (ATFIILPIFAFANSGINLTNI), 299 to 319 (IALGLFIGKPLGIISFLWVGV), 337 to 357 (GMSALAGIGFTMSLFVGSLAF), and 370 to 390 (LGIIMGSLFSGLLGYLLLNKT).

This sequence belongs to the NhaA Na(+)/H(+) (TC 2.A.33) antiporter family.

It is found in the cell inner membrane. The catalysed reaction is Na(+)(in) + 2 H(+)(out) = Na(+)(out) + 2 H(+)(in). Its function is as follows. Na(+)/H(+) antiporter that extrudes sodium in exchange for external protons. The sequence is that of Na(+)/H(+) antiporter NhaA from Desulfotalea psychrophila (strain LSv54 / DSM 12343).